We begin with the raw amino-acid sequence, 158 residues long: Probable transcription regulator ArfM (158 aa).

Its function is as follows. Activates, in anaerobic conditions, the transcription of the fermentative operons lctEP and alsDS, of the hmp gene encoding a flavohemoglobin-like protein, the nitrite reductase operon nasDE and the heme biosynthesis genes hemN and hemZ. This chain is Probable transcription regulator ArfM (arfM), found in Bacillus subtilis (strain 168).